Consider the following 351-residue polypeptide: Putative F-box protein At4g09790 (351 aa).

The F-box domain occupies 1–51; sequence MTTICDLPRDLVARILSRVPLTSMRRVRFTCKRWNTISKDPSFAKTHFGKA.

The chain is Putative F-box protein At4g09790 from Arabidopsis thaliana (Mouse-ear cress).